Consider the following 523-residue polypeptide: Inosine-5'-monophosphate dehydrogenase 2 (523 aa).

CBS domains are found at residues 121 to 183 (FINN…VQDV) and 184 to 240 (MTKN…PLAS). Residues 278–280 (DSS) and 328–330 (GMG) each bind NAD(+). 2 residues coordinate K(+): G330 and G332. S333 is an IMP binding site. C335 contacts K(+). Residue C335 is the Thioimidate intermediate of the active site. Residues 368–370 (DGG), 391–392 (GG), and 415–419 (YRGMG) contribute to the IMP site. Residue R437 is the Proton acceptor of the active site. Q449 lines the IMP pocket. K(+) contacts are provided by E508, G509, and G510.

The protein belongs to the IMPDH/GMPR family. As to quaternary structure, homotetramer. Seems to be able to form heterotetramers composed from more than 1 of the 3 IMPDH gene products (IMD2-4). K(+) is required as a cofactor.

The protein resides in the cytoplasm. The catalysed reaction is IMP + NAD(+) + H2O = XMP + NADH + H(+). Its pathway is purine metabolism; XMP biosynthesis via de novo pathway; XMP from IMP: step 1/1. Its activity is regulated as follows. Mycophenolic acid (MPA) is a non-competitive inhibitor that prevents formation of the closed enzyme conformation by binding to the same site as the amobile flap. In contrast, mizoribine monophosphate (MZP) is a competitive inhibitor that induces the closed conformation. MPA is a potent inhibitor of mammalian IMPDHs but a poor inhibitor of the bacterial enzymes. MZP is a more potent inhibitor of bacterial IMPDH. Its function is as follows. Catalyzes the conversion of inosine 5'-phosphate (IMP) to xanthosine 5'-phosphate (XMP), the first committed and rate-limiting step in the de novo synthesis of guanine nucleotides, and therefore plays an important role in the regulation of cell growth. In contrast to the other IMPDH alleles IMD3 and IMD4, the enzymatic activity of IMD2 seems to be intrinsically drug resistant. This chain is Inosine-5'-monophosphate dehydrogenase 2, found in Saccharomyces cerevisiae (strain ATCC 204508 / S288c) (Baker's yeast).